Reading from the N-terminus, the 1105-residue chain is DNA polymerase delta catalytic subunit (1105 aa).

The interval 1–46 is disordered; the sequence is MSSGGRGGKRRGAPPPGPSGAAAKRAHPGGTPQPPPPAATAAAPVA. Zn(2+) contacts are provided by cysteine 1015, cysteine 1018, cysteine 1030, and cysteine 1033. A CysA-type zinc finger spans residues 1015–1033; the sequence is CLGCKAVISGSNQTLCFHC. The [4Fe-4S] cluster site is built by cysteine 1062, cysteine 1065, cysteine 1075, and cysteine 1080. The CysB motif motif lies at 1062–1080; it reads CQECQGSLHQDVLCTSRDC.

Belongs to the DNA polymerase type-B family. As to quaternary structure, heterodimer with subunits of 125 kDa and 50 kDa. The 125 kDa subunit contains the polymerase active site and most likely the active site for the 3'-5' exonuclease activity. Requires [4Fe-4S] cluster as cofactor.

It localises to the nucleus. It catalyses the reaction DNA(n) + a 2'-deoxyribonucleoside 5'-triphosphate = DNA(n+1) + diphosphate. Functionally, this polymerase possesses two enzymatic activities: DNA synthesis (polymerase) and an exonucleolytic activity that degrades single-stranded DNA in the 3'- to 5'-direction. The protein is DNA polymerase delta catalytic subunit (POLD1) of Oryza sativa subsp. japonica (Rice).